The chain runs to 381 residues: Homoserine O-succinyltransferase (381 aa).

Residues 45-360 (NAVLVCHALN…PHGHDAFLLD (316 aa)) form the AB hydrolase-1 domain. The active-site Nucleophile is S151. R221 serves as a coordination point for substrate. Catalysis depends on residues D321 and H354. Residue D355 coordinates substrate.

The protein belongs to the AB hydrolase superfamily. MetX family. Homodimer.

The protein resides in the cytoplasm. It catalyses the reaction L-homoserine + succinyl-CoA = O-succinyl-L-homoserine + CoA. It functions in the pathway amino-acid biosynthesis; L-methionine biosynthesis via de novo pathway; O-succinyl-L-homoserine from L-homoserine: step 1/1. Its function is as follows. Transfers a succinyl group from succinyl-CoA to L-homoserine, forming succinyl-L-homoserine. The protein is Homoserine O-succinyltransferase of Burkholderia lata (strain ATCC 17760 / DSM 23089 / LMG 22485 / NCIMB 9086 / R18194 / 383).